The chain runs to 421 residues: Leucine-rich repeat-containing protein 42 (421 aa).

LRR repeat units follow at residues 149 to 170 (VLCS…EEIK), 174 to 195 (ELTR…LEHL), 202 to 222 (SVTQ…RKMT), 234 to 255 (NLAL…GYLF), and 259 to 280 (KLNC…KDKL). The segment at 376–406 (PLLSQESKKSKKRAFKESEQEQSSPQSAKQK) is disordered. The segment covering 396–406 (EQSSPQSAKQK) has biased composition (low complexity). The residue at position 399 (Ser399) is a Phosphoserine.

This sequence belongs to the LRRC42 family.

In Mus musculus (Mouse), this protein is Leucine-rich repeat-containing protein 42 (Lrrc42).